We begin with the raw amino-acid sequence, 121 residues long: Small ribosomal subunit protein eS24 (121 aa).

Belongs to the eukaryotic ribosomal protein eS24 family.

In Pyrobaculum arsenaticum (strain DSM 13514 / JCM 11321 / PZ6), this protein is Small ribosomal subunit protein eS24.